We begin with the raw amino-acid sequence, 231 residues long: 2-C-methyl-D-erythritol 4-phosphate cytidylyltransferase (231 aa).

It belongs to the IspD/TarI cytidylyltransferase family. IspD subfamily.

The enzyme catalyses 2-C-methyl-D-erythritol 4-phosphate + CTP + H(+) = 4-CDP-2-C-methyl-D-erythritol + diphosphate. Its pathway is isoprenoid biosynthesis; isopentenyl diphosphate biosynthesis via DXP pathway; isopentenyl diphosphate from 1-deoxy-D-xylulose 5-phosphate: step 2/6. In terms of biological role, catalyzes the formation of 4-diphosphocytidyl-2-C-methyl-D-erythritol from CTP and 2-C-methyl-D-erythritol 4-phosphate (MEP). This chain is 2-C-methyl-D-erythritol 4-phosphate cytidylyltransferase, found in Pseudoalteromonas atlantica (strain T6c / ATCC BAA-1087).